The sequence spans 152 residues: Deoxyuridine 5'-triphosphate nucleotidohydrolase (152 aa).

Substrate contacts are provided by residues 72-74 (RSG), Asn85, and 89-91 (TVD).

Belongs to the dUTPase family. Mg(2+) serves as cofactor.

It carries out the reaction dUTP + H2O = dUMP + diphosphate + H(+). The protein operates within pyrimidine metabolism; dUMP biosynthesis; dUMP from dCTP (dUTP route): step 2/2. This enzyme is involved in nucleotide metabolism: it produces dUMP, the immediate precursor of thymidine nucleotides and it decreases the intracellular concentration of dUTP so that uracil cannot be incorporated into DNA. The polypeptide is Deoxyuridine 5'-triphosphate nucleotidohydrolase (Nitrobacter winogradskyi (strain ATCC 25391 / DSM 10237 / CIP 104748 / NCIMB 11846 / Nb-255)).